The sequence spans 856 residues: DNA mismatch repair protein MutS (856 aa).

618 to 625 (GPNMGGKS) serves as a coordination point for ATP.

The protein belongs to the DNA mismatch repair MutS family.

This protein is involved in the repair of mismatches in DNA. It is possible that it carries out the mismatch recognition step. This protein has a weak ATPase activity. In Shewanella baltica (strain OS223), this protein is DNA mismatch repair protein MutS.